The chain runs to 350 residues: UDP-N-acetylenolpyruvoylglucosamine reductase (350 aa).

Residues 24–195 (HVEATARWLL…VAVEFNLPLL (172 aa)) enclose the FAD-binding PCMH-type domain. The active site involves R172. The active-site Proton donor is S245. Residue E342 is part of the active site.

The protein belongs to the MurB family. The cofactor is FAD.

It localises to the cytoplasm. It catalyses the reaction UDP-N-acetyl-alpha-D-muramate + NADP(+) = UDP-N-acetyl-3-O-(1-carboxyvinyl)-alpha-D-glucosamine + NADPH + H(+). It participates in cell wall biogenesis; peptidoglycan biosynthesis. Its function is as follows. Cell wall formation. The polypeptide is UDP-N-acetylenolpyruvoylglucosamine reductase (Xanthomonas axonopodis pv. citri (strain 306)).